The sequence spans 133 residues: Hexon-interlacing protein (133 aa).

Residues 97–127 (REEDALSVVLTRMEELSQQLQDLFAKVALLN) adopt a coiled-coil conformation.

It belongs to the adenoviridae hexon-interlacing protein family. In terms of assembly, homotrimer. Interacts with hexon protein; this interaction tethers the hexons together. Self-interacts with adjacent proteins. Interacts with kinesin light chain KLC1; this interaction leads to capsid disruption at the nuclear pore complex during virus entry into host cell.

It is found in the virion. The protein resides in the host nucleus. Structural component of the virion that acts as a cement protein on the capsid exterior and forms triskelion structures consisting of three molecules that stabilize three hexon trimers at the center of each icosahedral facet and fixes the peripentonal hexons. Dispensable for assembly. During virus entry, recruits the anterograde motor kinesin-1 to the capsid docked at the nuclear pore complex thereby subjecting the docked capsid to a pulling force. The resulting tension leads to capsid disruption, dispersion of capsid fragments toward cell periphery and eventually viral DNA entry into the host nucleus. In Homo sapiens (Human), this protein is Hexon-interlacing protein.